The sequence spans 340 residues: GTPase Obg (340 aa).

The Obg domain occupies 1-158 (MSFIDEAKVY…KYITLKLKII (158 aa)). The region spanning 159–325 (SDIGIIGLPN…LSTLIQYIHK (167 aa)) is the OBG-type G domain. GTP is bound by residues 165–172 (GLPNAGKS), 190–194 (FTTLE), 211–214 (DIPG), 278–281 (NKSD), and 306–308 (SSI). Serine 172 and threonine 192 together coordinate Mg(2+).

The protein belongs to the TRAFAC class OBG-HflX-like GTPase superfamily. OBG GTPase family. Monomer. Mg(2+) is required as a cofactor.

It is found in the cytoplasm. Functionally, an essential GTPase which binds GTP, GDP and possibly (p)ppGpp with moderate affinity, with high nucleotide exchange rates and a fairly low GTP hydrolysis rate. Plays a role in control of the cell cycle, stress response, ribosome biogenesis and in those bacteria that undergo differentiation, in morphogenesis control. This chain is GTPase Obg, found in Ehrlichia chaffeensis (strain ATCC CRL-10679 / Arkansas).